A 230-amino-acid chain; its full sequence is UPF0688 protein C1orf174 homolog (230 aa).

Disordered stretches follow at residues 1 to 85 (MRSR…SLPK) and 97 to 166 (AEDS…VRAS). Positions 11–30 (RSSARLRARSYSSASLASAR) are enriched in low complexity. The span at 31–48 (DVTSSTSAKTTCLASSSH) shows a compositional bias: polar residues. Residues 49 to 78 (KATDRRTSKKFKYDKGHLVKAELQKLDPKS) show a composition bias toward basic and acidic residues. S180 is modified (phosphoserine).

Belongs to the UPF0688 family.

It localises to the nucleus. The sequence is that of UPF0688 protein C1orf174 homolog from Mus musculus (Mouse).